The following is a 273-amino-acid chain: Glucosamine-6-phosphate deaminase (273 aa).

Asp72 serves as the catalytic Proton acceptor; for enolization step. Asp141 serves as the catalytic For ring-opening step. Residue His143 is the Proton acceptor; for ring-opening step of the active site. The active-site For ring-opening step is Glu148.

It belongs to the glucosamine/galactosamine-6-phosphate isomerase family. In terms of assembly, homohexamer.

The protein resides in the cytoplasm. The catalysed reaction is alpha-D-glucosamine 6-phosphate + H2O = beta-D-fructose 6-phosphate + NH4(+). It functions in the pathway nucleotide-sugar biosynthesis; UDP-N-acetyl-alpha-D-glucosamine biosynthesis; alpha-D-glucosamine 6-phosphate from D-fructose 6-phosphate: step 1/1. Its function is as follows. Catalyzes the reversible conversion of alpha-D-glucosamine 6-phosphate (GlcN-6P) into beta-D-fructose 6-phosphate (Fru-6P) and ammonium ion, a regulatory reaction step in de novo uridine diphosphate-N-acetyl-alpha-D-glucosamine (UDP-GlcNAc) biosynthesis via hexosamine pathway. This Anopheles gambiae (African malaria mosquito) protein is Glucosamine-6-phosphate deaminase (Gnpda1).